A 153-amino-acid polypeptide reads, in one-letter code: MVKAVAVRGDSKISGTVTFEQADANAPTTVSWNITGHDANAERAFHVHQFGDNTNGCTSAGPHFNPFGKEHGAPEDENRHVGDLGNFKTDAEGNAVGSKQDKLIKLIGAESVLGRTLVIHAGTDDLGRSEHPESKKTGNAGARPACGVIGIAA.

The Cu cation site is built by H46, H48, and H63. A disulfide bond links C57 and C146. Positions 61-80 (GPHFNPFGKEHGAPEDENRH) are disordered. 4 residues coordinate Zn(2+): H63, H71, H80, and D83. A compositionally biased stretch (basic and acidic residues) spans 68 to 80 (GKEHGAPEDENRH). H120 lines the Cu cation pocket. Positions 124–136 (DDLGRSEHPESKK) are enriched in basic and acidic residues. The tract at residues 124-143 (DDLGRSEHPESKKTGNAGAR) is disordered. R143 contacts substrate.

This sequence belongs to the Cu-Zn superoxide dismutase family. In terms of assembly, homodimer. Cu cation is required as a cofactor. The cofactor is Zn(2+).

Its subcellular location is the cytoplasm. The enzyme catalyses 2 superoxide + 2 H(+) = H2O2 + O2. Destroys radicals which are normally produced within the cells and which are toxic to biological systems. This is Superoxide dismutase [Cu-Zn] (sodC) from Aspergillus flavus.